The chain runs to 76 residues: UPF0346 protein LBA0976 (76 aa).

The protein belongs to the UPF0346 family.

This Lactobacillus acidophilus (strain ATCC 700396 / NCK56 / N2 / NCFM) protein is UPF0346 protein LBA0976.